The primary structure comprises 771 residues: U-box domain-containing protein 6 (771 aa).

Residues 274 to 348 (IPPEELRCPI…ASWCEQNGIT (75 aa)) form the U-box domain. The interval 394-415 (EESSTIESERQQKEKNNAPDEV) is disordered. Positions 400–411 (ESERQQKEKNNA) are enriched in basic and acidic residues. ARM repeat units lie at residues 456 to 499 (EEAR…NLAV), 502 to 542 (NRNK…CLEK), 544 to 581 (KPVI…NLST), 583 to 622 (SPNI…NLAS), and 625 to 664 (EGKE…ILCT). Positions 706 to 722 (EQRHRDQPSPNKEEAPR) are enriched in basic and acidic residues. A disordered region spans residues 706–751 (EQRHRDQPSPNKEEAPRKTVSAPMAIPAPVSAPESEVKPLTKSISR).

The catalysed reaction is S-ubiquitinyl-[E2 ubiquitin-conjugating enzyme]-L-cysteine + [acceptor protein]-L-lysine = [E2 ubiquitin-conjugating enzyme]-L-cysteine + N(6)-ubiquitinyl-[acceptor protein]-L-lysine.. Its pathway is protein modification; protein ubiquitination. Its function is as follows. Functions as an E3 ubiquitin ligase. The chain is U-box domain-containing protein 6 (PUB6) from Arabidopsis thaliana (Mouse-ear cress).